The primary structure comprises 761 residues: Zinc finger protein 711 (761 aa).

Glycyl lysine isopeptide (Lys-Gly) (interchain with G-Cter in SUMO2) cross-links involve residues Lys224, Lys235, and Lys296. 5 consecutive C2H2-type zinc fingers follow at residues 383–408 (YPCH…HPDH), 414–436 (YQCT…LESH), 476–499 (HKCK…LAVH), 505–527 (HVCV…MRTH), and 533–556 (YQCQ…KSKH). Residues 515–761 (RHPSELKKHM…IMRHHKEALM (247 aa)) are required for transcriptional activation. The C2H2-type 6; atypical zinc finger occupies 562–584 (YKCEHCPQAFGDERELQRHLDLF). Residues Cys564, Cys567, and His580 each coordinate Zn(2+). C2H2-type zinc fingers lie at residues 590-613 (HQCP…ISVH), 619-641 (HKCE…SDIH), 647-670 (HQCR…LSVH), 676-698 (LKCK…MKTH), 704-727 (YQCE…ISIH), and 733-755 (HRCE…IMRH).

This sequence belongs to the krueppel C2H2-type zinc-finger protein family. In terms of assembly, interacts with PHF8. Expressed in neural tissues.

Its subcellular location is the nucleus. In terms of biological role, transcription regulator required for brain development. Probably acts as a transcription factor that binds to the promoter of target genes and recruits PHF8 histone demethylase, leading to activated expression of genes involved in neuron development, such as KDM5C. May compete with transcription factor ARX for activation of expression of KDM5C. This chain is Zinc finger protein 711 (ZNF711), found in Homo sapiens (Human).